The sequence spans 187 residues: Large ribosomal subunit protein uL5 (187 aa).

The protein belongs to the universal ribosomal protein uL5 family. In terms of assembly, part of the 50S ribosomal subunit; part of the 5S rRNA/L5/L18/L25 subcomplex. Contacts the 5S rRNA and the P site tRNA. Forms a bridge to the 30S subunit in the 70S ribosome.

Functionally, this is one of the proteins that bind and probably mediate the attachment of the 5S RNA into the large ribosomal subunit, where it forms part of the central protuberance. In the 70S ribosome it contacts protein S13 of the 30S subunit (bridge B1b), connecting the 2 subunits; this bridge is implicated in subunit movement. Contacts the P site tRNA; the 5S rRNA and some of its associated proteins might help stabilize positioning of ribosome-bound tRNAs. This Saccharopolyspora erythraea (strain ATCC 11635 / DSM 40517 / JCM 4748 / NBRC 13426 / NCIMB 8594 / NRRL 2338) protein is Large ribosomal subunit protein uL5.